A 668-amino-acid chain; its full sequence is Packaging protein UL32 homolog (668 aa).

Polar residues predominate over residues 1 to 10; that stretch reads MNPSTHVSSN. Residues 1 to 35 are disordered; that stretch reads MNPSTHVSSNGPTTPPHGPHTTFLPPTSPAPSTSS. Residues 19–35 show a composition bias toward low complexity; that stretch reads PHTTFLPPTSPAPSTSS. Residues C200, C203, H276, and C282 each contribute to the Zn(2+) site. The segment at 200 to 282 is zinc finger 1; sequence CNLCAIISIC…FHLHFFINRC (83 aa). Composition is skewed to basic and acidic residues over residues 392–401 and 410–419; these read SEREDARMMM and GEKGGDDPGR. Positions 392–430 are disordered; it reads SEREDARMMMEEEEDEEGGEKGGDDPGRHNGGGTSGGFS. Residues C459, C462, H567, and C574 each coordinate Zn(2+). The tract at residues 459 to 574 is zinc finger 2; sequence CLLCELMACS…YKHFFCDPQC (116 aa).

Belongs to the herpesviridae UL32 protein family.

The protein resides in the host cytoplasm. It localises to the host nucleus. Its function is as follows. Plays a role in efficient localization of neo-synthesized capsids to nuclear replication compartments, thereby controlling cleavage and packaging of virus genomic DNA. In Homo sapiens (Human), this protein is Packaging protein UL32 homolog (UL52).